Here is a 185-residue protein sequence, read N- to C-terminus: Ribosome-recycling factor (185 aa).

This sequence belongs to the RRF family.

It localises to the cytoplasm. In terms of biological role, responsible for the release of ribosomes from messenger RNA at the termination of protein biosynthesis. May increase the efficiency of translation by recycling ribosomes from one round of translation to another. This is Ribosome-recycling factor from Listeria monocytogenes serotype 4a (strain HCC23).